We begin with the raw amino-acid sequence, 976 residues long: Leucine--tRNA ligase (976 aa).

The span at 1 to 23 (MTESPTTTPGSTSGAPSGVPSGV) shows a compositional bias: low complexity. The segment at 1–34 (MTESPTTTPGSTSGAPSGVPSGVNDAESDAPRHR) is disordered. The 'HIGH' region signature appears at 86-97 (PYPSGEGLHVGH). Residues 745–749 (KIGKS) carry the 'KMSKS' region motif. Lys748 contacts ATP.

This sequence belongs to the class-I aminoacyl-tRNA synthetase family.

The protein localises to the cytoplasm. The catalysed reaction is tRNA(Leu) + L-leucine + ATP = L-leucyl-tRNA(Leu) + AMP + diphosphate. This is Leucine--tRNA ligase from Mycobacterium ulcerans (strain Agy99).